Consider the following 466-residue polypeptide: Glutamate--tRNA ligase (466 aa).

The short motif at 10–20 (PSPTGYLHVGG) is the 'HIGH' region element. 4 residues coordinate Zn(2+): Cys99, Cys101, Cys126, and His128. Positions 237-241 (RLSKR) match the 'KMSKS' region motif. Lys240 contributes to the ATP binding site.

Belongs to the class-I aminoacyl-tRNA synthetase family. Glutamate--tRNA ligase type 1 subfamily. In terms of assembly, monomer. Zn(2+) serves as cofactor.

Its subcellular location is the cytoplasm. It catalyses the reaction tRNA(Glu) + L-glutamate + ATP = L-glutamyl-tRNA(Glu) + AMP + diphosphate. Catalyzes the attachment of glutamate to tRNA(Glu) in a two-step reaction: glutamate is first activated by ATP to form Glu-AMP and then transferred to the acceptor end of tRNA(Glu). In Trichlorobacter lovleyi (strain ATCC BAA-1151 / DSM 17278 / SZ) (Geobacter lovleyi), this protein is Glutamate--tRNA ligase.